A 325-amino-acid polypeptide reads, in one-letter code: Solute-binding protein RD1_1052 (325 aa).

The N-terminal stretch at 1–26 is a signal peptide; sequence MRLFTKIKGLAAVTCVAALASSAAFA. D-mannonate is bound by residues Glu-75, 93–95, 148–151, Arg-171, and Asn-211; these read GES and RGPR. Residues Glu-75, 93-95, 148-151, Arg-171, and Asn-211 each bind L-galactonate; these read GES and RGPR.

It belongs to the bacterial solute-binding protein 7 family. In terms of assembly, the complex is comprised of an extracytoplasmic solute-binding protein and a heteromeric permease formed by two transmembrane proteins.

It localises to the periplasm. Functionally, solute-binding protein that binds L-galactonate and D-mannonate (in vitro). Probably part of a tripartite ATP-independent periplasmic (TRAP) transport system that mediates solute transport into the cytoplasm. The sequence is that of Solute-binding protein RD1_1052 from Roseobacter denitrificans (strain ATCC 33942 / OCh 114) (Erythrobacter sp. (strain OCh 114)).